Reading from the N-terminus, the 648-residue chain is Biosynthetic arginine decarboxylase (648 aa).

Lys109 bears the N6-(pyridoxal phosphate)lysine mark. 291-301 contacts substrate; it reads IDVGGGLGIDF.

Belongs to the Orn/Lys/Arg decarboxylase class-II family. SpeA subfamily. The cofactor is Mg(2+). Pyridoxal 5'-phosphate is required as a cofactor.

It carries out the reaction L-arginine + H(+) = agmatine + CO2. It functions in the pathway amine and polyamine biosynthesis; agmatine biosynthesis; agmatine from L-arginine: step 1/1. In terms of biological role, catalyzes the biosynthesis of agmatine from arginine. The chain is Biosynthetic arginine decarboxylase from Prochlorococcus marinus (strain MIT 9215).